Here is a 581-residue protein sequence, read N- to C-terminus: Estrogen receptor (581 aa).

Positions 1–144 (MYPEDSRVSG…GFEMAKEMRF (144 aa)) are modulating. Disordered regions lie at residues 45–66 (APLDAHGPPSDGSLQSLGSGPN) and 99–123 (RSSVPSSQHSVSREDQCGTSDDSYS). Residues 56-66 (GSLQSLGSGPN) show a composition bias toward polar residues. Positions 142–217 (MRFCAVCSDY…VGMMKGGVRK (76 aa)) form a DNA-binding region, nuclear receptor. 2 NR C4-type zinc fingers span residues 145 to 165 (CAVCSDYASGYHYGVWSCEGC) and 181 to 200 (CPATNQCTIDRNRRKSCQAC). Residues 211-272 (MKGGVRKDRG…GGGKSSVISM (62 aa)) form a hinge region. The span at 216–246 (RKDRGRVLRRDKRRTGTSDRDKASKGLEHRT) shows a compositional bias: basic and acidic residues. The segment at 216-269 (RKDRGRVLRRDKRRTGTSDRDKASKGLEHRTAPPQDRRKHISSSAGGGGGKSSV) is disordered. Positions 273–509 (PPDQVLLLLR…DLLLEMLDAH (237 aa)) constitute an NR LBD domain. Basic and acidic residues predominate over residues 514 to 528 (PDRPAETWSQADREP). The interval 514 to 581 (PDRPAETWSQ…VHPHPMKPTE (68 aa)) is disordered. The span at 572–581 (VHPHPMKPTE) shows a compositional bias: basic residues.

Belongs to the nuclear hormone receptor family. NR3 subfamily. In terms of assembly, binds DNA as a homodimer. Can form a heterodimer with ER-beta.

It is found in the nucleus. Its function is as follows. The steroid hormones and their receptors are involved in the regulation of eukaryotic gene expression and affect cellular proliferation and differentiation in target tissues. This chain is Estrogen receptor (esr1), found in Sparus aurata (Gilthead sea bream).